A 1483-amino-acid polypeptide reads, in one-letter code: Rho GTPase-activating protein 23 (1483 aa).

Positions 15–34 (PEPRPPQLPLGPRDGCSSGR) are disordered. Positions 71–155 (HCILKEEENG…TLELSIMPKD (85 aa)) constitute a PDZ domain. Disordered stretches follow at residues 212–276 (ISAL…PGSR) and 300–345 (AGER…GQEG). Positions 316-325 (SQDRLEDVTT) are enriched in basic and acidic residues. Positions 331-342 (CSTSQDALSQLG) are enriched in polar residues. A phosphoserine mark is found at S361 and S372. Residues 385–407 (PSARTSACPSRDLTQAPPPSGLQ) are disordered. Position 421 is a phosphoserine (S421). 2 disordered regions span residues 448 to 485 (SLAQ…DHRD) and 508 to 527 (NLGF…RLGR). Residues S515, S579, S607, and S619 each carry the phosphoserine modification. At T652 the chain carries Phosphothreonine. Phosphoserine occurs at positions 655, 658, and 673. Residues 684-804 (DIRREGWLYY…WIRAIRENSR (121 aa)) form the PH domain. The segment at 827-848 (KVSHSSGPKADSSPKGSRGLGG) is disordered. A Glycyl lysine isopeptide (Lys-Gly) (interchain with G-Cter in SUMO2) cross-link involves residue K850. 4 disordered regions span residues 860–879 (RGLR…VAAP), 1093–1150 (FSDD…SWVP), 1171–1361 (KRKK…GSRP), and 1419–1469 (ELGG…LQGL). The Rho-GAP domain occupies 901–1093 (IRLEECQPAT…TLIQHSDWFF (193 aa)). Residues 1099–1110 (KGERTPVDDKEP) show a composition bias toward basic and acidic residues. Composition is skewed to polar residues over residues 1133 to 1144 (GSDSTTCSSAKS) and 1236 to 1248 (SIVS…STMD). Low complexity predominate over residues 1338–1351 (GSASSSSQESLRPP). Residues 1440-1457 (SGLSSLESTKARASSAAS) are compositionally biased toward polar residues.

Functionally, GTPase activator for the Rho-type GTPases by converting them to an inactive GDP-bound state. The protein is Rho GTPase-activating protein 23 (Arhgap23) of Mus musculus (Mouse).